Reading from the N-terminus, the 87-residue chain is Large ribosomal subunit protein eL31 (87 aa).

The protein belongs to the eukaryotic ribosomal protein eL31 family.

This chain is Large ribosomal subunit protein eL31, found in Methanoculleus marisnigri (strain ATCC 35101 / DSM 1498 / JR1).